The sequence spans 398 residues: Succinate--CoA ligase [ADP-forming] subunit beta (398 aa).

An ATP-grasp domain is found at 9–253 (MALLNERGVS…AGASDPLEQE (245 aa)). ATP is bound by residues lysine 46, 53–55 (GRG), valine 111, and glutamate 116. Mg(2+) is bound by residues asparagine 208 and aspartate 222. Substrate contacts are provided by residues asparagine 273 and 330 to 332 (GIM).

Belongs to the succinate/malate CoA ligase beta subunit family. As to quaternary structure, heterotetramer of two alpha and two beta subunits. Mg(2+) is required as a cofactor.

The catalysed reaction is succinate + ATP + CoA = succinyl-CoA + ADP + phosphate. It catalyses the reaction GTP + succinate + CoA = succinyl-CoA + GDP + phosphate. It participates in carbohydrate metabolism; tricarboxylic acid cycle; succinate from succinyl-CoA (ligase route): step 1/1. In terms of biological role, succinyl-CoA synthetase functions in the citric acid cycle (TCA), coupling the hydrolysis of succinyl-CoA to the synthesis of either ATP or GTP and thus represents the only step of substrate-level phosphorylation in the TCA. The beta subunit provides nucleotide specificity of the enzyme and binds the substrate succinate, while the binding sites for coenzyme A and phosphate are found in the alpha subunit. This Zymomonas mobilis subsp. mobilis (strain ATCC 31821 / ZM4 / CP4) protein is Succinate--CoA ligase [ADP-forming] subunit beta.